Here is a 585-residue protein sequence, read N- to C-terminus: Zinc finger protein Eos (585 aa).

Disordered stretches follow at residues 1 to 43 (MHTP…PDFL) and 68 to 98 (EKEF…SANS). Over residues 25-34 (QGKDNLERDP) the composition is skewed to basic and acidic residues. A compositionally biased stretch (polar residues) spans 79-98 (SVSTPNSQHSSPSRSLSANS). Lys-100 participates in a covalent cross-link: Glycyl lysine isopeptide (Lys-Gly) (interchain with G-Cter in SUMO2). Ser-105 carries the post-translational modification Phosphoserine. 4 C2H2-type zinc fingers span residues 159 to 181 (LKCD…KRSH), 187 to 209 (FHCN…IKLH), 215 to 237 (FKCP…LRTH), and 248 to 271 (YKCN…ERCH). The segment at 281–585 (AQALAGQPGD…HIVRGEHKVG (305 aa)) is interaction with FOXP3. The residue at position 335 (Lys-335) is an N6-acetyllysine. Positions 410–489 (PGRLELPGSR…QPPPTIVVGR (80 aa)) are disordered. Positions 425–429 (PEDLA) match the CTBP-binding motif PEDLA motif. Residues 475 to 484 (QGPPPQPPPT) are compositionally biased toward pro residues. A Glycyl lysine isopeptide (Lys-Gly) (interchain with G-Cter in SUMO2) cross-link involves residue Lys-500. C2H2-type zinc fingers lie at residues 530–552 (FKCE…MGCH) and 558–582 (FECN…RGEH).

The protein belongs to the Ikaros C2H2-type zinc-finger protein family. In terms of assembly, self-associates. Interacts with other family members; IKZF1, IKZF2, IKZF3 and IKZF5. Interacts with CTBP2. Interacts with SPI1, MITF, FOXP3 and CTBP1. Highly expressed in skeletal muscle, low levels of expression in heart, thymus, kidney, liver, and spleen. Expressed in the hematopoietic cell lines MOLT-4, NALM-6 and K-562. Highly expressed in THP-1 and M-07e cell lines, which have characteristics of myeloid and early megakaryocytic cells respectively.

It is found in the nucleus. Functionally, DNA-binding protein that binds to the 5'GGGAATRCC-3' Ikaros-binding sequence. Transcriptional repressor. Interacts with SPI1 and MITF to repress transcription of the CTSK and ACP5 promoters via recruitment of corepressors SIN3A and CTBP2. May be involved in the development of central and peripheral nervous systems. Essential for the inhibitory function of regulatory T-cells (Treg). Mediates FOXP3-mediated gene silencing in regulatory T-cells (Treg) via recruitment of corepressor CTBP1. The sequence is that of Zinc finger protein Eos (IKZF4) from Homo sapiens (Human).